The sequence spans 190 residues: Elongation factor P 2 (190 aa).

It belongs to the elongation factor P family.

The protein localises to the cytoplasm. Its pathway is protein biosynthesis; polypeptide chain elongation. Functionally, involved in peptide bond synthesis. Stimulates efficient translation and peptide-bond synthesis on native or reconstituted 70S ribosomes in vitro. Probably functions indirectly by altering the affinity of the ribosome for aminoacyl-tRNA, thus increasing their reactivity as acceptors for peptidyl transferase. The protein is Elongation factor P 2 (efp2) of Chlamydia trachomatis serovar D (strain ATCC VR-885 / DSM 19411 / UW-3/Cx).